We begin with the raw amino-acid sequence, 109 residues long: Small ribosomal subunit protein bS6 (109 aa).

Belongs to the bacterial ribosomal protein bS6 family.

Functionally, binds together with bS18 to 16S ribosomal RNA. The sequence is that of Small ribosomal subunit protein bS6 from Ehrlichia ruminantium (strain Gardel).